A 474-amino-acid chain; its full sequence is Trehalose-6-phosphate synthase (474 aa).

Arg-10 is a D-glucose 6-phosphate binding site. 22–23 (GG) contributes to the UDP-alpha-D-glucose binding site. D-glucose 6-phosphate contacts are provided by Tyr-77 and Asp-131. UDP-alpha-D-glucose is bound by residues Arg-263 and Lys-268. Residue Arg-301 participates in D-glucose 6-phosphate binding. UDP-alpha-D-glucose contacts are provided by residues Phe-340 and 366–370 (LVAKE).

Belongs to the glycosyltransferase 20 family. In terms of assembly, homotetramer.

The enzyme catalyses D-glucose 6-phosphate + UDP-alpha-D-glucose = alpha,alpha-trehalose 6-phosphate + UDP + H(+). It functions in the pathway glycan biosynthesis; trehalose biosynthesis. Probably involved in the osmoprotection via the biosynthesis of trehalose. Catalyzes the transfer of glucose from UDP-alpha-D-glucose (UDP-Glc) to D-glucose 6-phosphate (Glc-6-P) to form trehalose-6-phosphate. Acts with retention of the anomeric configuration of the UDP-sugar donor. This chain is Trehalose-6-phosphate synthase, found in Escherichia coli O9:H4 (strain HS).